Reading from the N-terminus, the 201-residue chain is Large ribosomal subunit protein bL25 (201 aa).

Belongs to the bacterial ribosomal protein bL25 family. CTC subfamily. Part of the 50S ribosomal subunit; part of the 5S rRNA/L5/L18/L25 subcomplex. Contacts the 5S rRNA. Binds to the 5S rRNA independently of L5 and L18.

Functionally, this is one of the proteins that binds to the 5S RNA in the ribosome where it forms part of the central protuberance. The protein is Large ribosomal subunit protein bL25 of Thiobacillus denitrificans (strain ATCC 25259 / T1).